The following is a 674-amino-acid chain: Sodium/myo-inositol cotransporter 2 (674 aa).

Topologically, residues 1–25 (MESSASSPPLTQSDPLEAFPRRTLE) are extracellular. A helical membrane pass occupies residues 26-46 (AGDIAVLVLYFLFVLAVGLWS). The Cytoplasmic segment spans residues 47-56 (TVKTKRDTVK). A helical membrane pass occupies residues 57–77 (GYFLAGGNMLWWPVGASLFAS). Residues 78 to 102 (NVGSGHFVGLAGSGAAAGLSVTAYE) are Extracellular-facing. The helical transmembrane segment at 103-123 (LNGLFFVLMLSWIFLPIYITG) threads the bilayer. The Cytoplasmic portion of the chain corresponds to 124-140 (QVTTMPEYLRKRFGGNR). Residues 141-161 (IPIILAVLYLFIYIFTKISVD) traverse the membrane as a helical segment. Residues 162-180 (MYAGAIFIQQSLHVNLYLA) are Extracellular-facing. A helical membrane pass occupies residues 181-201 (IVGLLAVTALYTIAGGLAAVI). Topologically, residues 202 to 208 (YTDALQT) are cytoplasmic. Residues 209 to 229 (LIMLIGALILMGYSFAAVGGL) traverse the membrane as a helical segment. Over 230-272 (EGLEEKYFLAMASNRSGNSSCGLPREDAFHIFRDPVTSDLPWP) the chain is Extracellular. A helical membrane pass occupies residues 273 to 293 (GILFGMSIPSLWYWCTDQVIV). Over 294-308 (QRTLAAKNLSHAKGG) the chain is Cytoplasmic. A helical membrane pass occupies residues 309-329 (SLMAAYLKVLPLFIMVFPGMV). At 330 to 374 (SRVLFPDEVACADPEICRKVCSNPAGCSDIAYPKLVLELLPTGLR) the chain is on the extracellular side. The helical transmembrane segment at 375 to 397 (GLMMAVMVAALTSSLTSIFNSAS) threads the bilayer. Over 398–418 (TIFTMDLWNHLRPRASEKELM) the chain is Cytoplasmic. The chain crosses the membrane as a helical span at residues 419-439 (IVGRVFVLLLVLVSILWIPVV). Residues 440–446 (QASQGGQ) are Extracellular-facing. A helical transmembrane segment spans residues 447–467 (LFIYIQSISSYLQPPVAVVFI). The Cytoplasmic segment spans residues 468 to 479 (MGCFWKRANEKG). A helical transmembrane segment spans residues 480 to 500 (AFFGLVLGLLLGLVRLILDFI). Residues 501–521 (YVQPRCDQLDERPAVVKDVHY) are Extracellular-facing. Residues 522 to 542 (LYFSMILSSVTLITVCAVSWF) traverse the membrane as a helical segment. Residues 543-653 (TEPPSKEMVS…SLEENPLVKT (111 aa)) are Cytoplasmic-facing. The tract at residues 567–589 (EQVPSATPPPLTLSQNGTPEASG) is disordered. Polar residues predominate over residues 578 to 589 (TLSQNGTPEASG). A helical membrane pass occupies residues 654-674 (LLDLNLIICISCAIFLWGYFA).

Belongs to the sodium:solute symporter (SSF) (TC 2.A.21) family.

It localises to the membrane. The protein localises to the apical cell membrane. The catalysed reaction is myo-inositol(out) + 2 Na(+)(out) = myo-inositol(in) + 2 Na(+)(in). It catalyses the reaction 1D-chiro-inositol(out) + 2 Na(+)(out) = 1D-chiro-inositol(in) + 2 Na(+)(in). The enzyme catalyses D-glucose(out) + 2 Na(+)(out) = D-glucose(in) + 2 Na(+)(in). It carries out the reaction D-xylose(out) + 2 Na(+)(out) = D-xylose(in) + 2 Na(+)(in). Its activity is regulated as follows. MI transport activity inhibited by D-chiro-inositol (DCI), phlorizin (Pz) and sodium (Na(+)). Insulin increases D-chiro-inositol uptake. In terms of biological role, involved in the sodium-dependent cotransport of myo-inositol (MI) with a Na(+):MI stoichiometry of 2:1. Exclusively responsible for apical MI transport and absorption in intestine. Can also transport D-chiro-inositol (DCI) but not L-fucose. Exhibits stereospecific cotransport of both D-glucose and D-xylose. May induce apoptosis through the TNF-alpha, PDCD1 pathway. May play a role in the regulation of MI concentration in serum, involving reabsorption in at least the proximal tubule of the kidney. This Bos taurus (Bovine) protein is Sodium/myo-inositol cotransporter 2.